We begin with the raw amino-acid sequence, 602 residues long: Elongation factor 4 (602 aa).

The region spanning 7–189 is the tr-type G domain; it reads SRIRNFSIIA…SIVQQVPPPA (183 aa). GTP is bound by residues 19–24 and 136–139; these read DHGKST and NKID.

This sequence belongs to the TRAFAC class translation factor GTPase superfamily. Classic translation factor GTPase family. LepA subfamily.

Its subcellular location is the cell inner membrane. It carries out the reaction GTP + H2O = GDP + phosphate + H(+). In terms of biological role, required for accurate and efficient protein synthesis under certain stress conditions. May act as a fidelity factor of the translation reaction, by catalyzing a one-codon backward translocation of tRNAs on improperly translocated ribosomes. Back-translocation proceeds from a post-translocation (POST) complex to a pre-translocation (PRE) complex, thus giving elongation factor G a second chance to translocate the tRNAs correctly. Binds to ribosomes in a GTP-dependent manner. The sequence is that of Elongation factor 4 from Picosynechococcus sp. (strain ATCC 27264 / PCC 7002 / PR-6) (Agmenellum quadruplicatum).